Reading from the N-terminus, the 476-residue chain is Eukaryotic translation initiation factor 3 subunit L (476 aa).

The PCI domain occupies 257 to 452 (DAIRMFSHIL…DLDYALENDL (196 aa)).

The protein belongs to the eIF-3 subunit L family. As to quaternary structure, component of the eukaryotic translation initiation factor 3 (eIF-3) complex.

It localises to the cytoplasm. Its function is as follows. Component of the eukaryotic translation initiation factor 3 (eIF-3) complex, which is involved in protein synthesis of a specialized repertoire of mRNAs and, together with other initiation factors, stimulates binding of mRNA and methionyl-tRNAi to the 40S ribosome. The eIF-3 complex specifically targets and initiates translation of a subset of mRNAs involved in cell proliferation. In Aspergillus oryzae (strain ATCC 42149 / RIB 40) (Yellow koji mold), this protein is Eukaryotic translation initiation factor 3 subunit L.